The primary structure comprises 359 residues: 4-hydroxy-3-methylbut-2-en-1-yl diphosphate synthase (flavodoxin) (359 aa).

4 residues coordinate [4Fe-4S] cluster: C264, C267, C299, and E306.

It belongs to the IspG family. Requires [4Fe-4S] cluster as cofactor.

The enzyme catalyses (2E)-4-hydroxy-3-methylbut-2-enyl diphosphate + oxidized [flavodoxin] + H2O + 2 H(+) = 2-C-methyl-D-erythritol 2,4-cyclic diphosphate + reduced [flavodoxin]. It functions in the pathway isoprenoid biosynthesis; isopentenyl diphosphate biosynthesis via DXP pathway; isopentenyl diphosphate from 1-deoxy-D-xylulose 5-phosphate: step 5/6. In terms of biological role, converts 2C-methyl-D-erythritol 2,4-cyclodiphosphate (ME-2,4cPP) into 1-hydroxy-2-methyl-2-(E)-butenyl 4-diphosphate. This Helicobacter pylori (strain P12) protein is 4-hydroxy-3-methylbut-2-en-1-yl diphosphate synthase (flavodoxin).